A 391-amino-acid chain; its full sequence is Argininosuccinate synthase (391 aa).

6-14 is a binding site for ATP; that stretch reads AYSGGLDTT. Tyrosine 84 contacts L-citrulline. Residue glycine 114 coordinates ATP. L-aspartate is bound by residues threonine 116, asparagine 120, and aspartate 121. Residue asparagine 120 coordinates L-citrulline. The L-citrulline site is built by arginine 124, serine 171, serine 180, glutamate 253, and tyrosine 265.

The protein belongs to the argininosuccinate synthase family. Type 1 subfamily. In terms of assembly, homotetramer.

Its subcellular location is the cytoplasm. It carries out the reaction L-citrulline + L-aspartate + ATP = 2-(N(omega)-L-arginino)succinate + AMP + diphosphate + H(+). The protein operates within amino-acid biosynthesis; L-arginine biosynthesis; L-arginine from L-ornithine and carbamoyl phosphate: step 2/3. The chain is Argininosuccinate synthase from Sulfolobus acidocaldarius (strain ATCC 33909 / DSM 639 / JCM 8929 / NBRC 15157 / NCIMB 11770).